The sequence spans 362 residues: Serine/threonine-protein kinase SBK2 (362 aa).

The span at 1–11 (MPGKQSEDRPM) shows a compositional bias: basic and acidic residues. Residues 1–20 (MPGKQSEDRPMEVAAVEDGG) form a disordered region. Positions 62–330 (YEEVRPLGQG…IKSYLGQPWK (269 aa)) constitute a Protein kinase domain. Residues 68 to 76 (LGQGRFGRV) and lysine 91 contribute to the ATP site. Residue aspartate 183 is the Proton acceptor of the active site. Positions 317–362 (PVSSIKSYLGQPWKQREEGAEELTKELREDGSRGGQEAAKGEQPAC) are disordered. Positions 330-348 (KQREEGAEELTKELREDGS) are enriched in basic and acidic residues.

This sequence belongs to the protein kinase superfamily. Ser/Thr protein kinase family. STKL subfamily.

It carries out the reaction L-seryl-[protein] + ATP = O-phospho-L-seryl-[protein] + ADP + H(+). The enzyme catalyses L-threonyl-[protein] + ATP = O-phospho-L-threonyl-[protein] + ADP + H(+). The polypeptide is Serine/threonine-protein kinase SBK2 (Sbk2) (Rattus norvegicus (Rat)).